The sequence spans 101 residues: Early E3A 11.6 kDa glycoprotein (101 aa).

Residue Asn-14 is glycosylated (N-linked (GlcNAc...) asparagine; by host). A helical transmembrane segment spans residues 41 to 62 (MWWFSIALMFVCLIIMWLICCL).

This sequence belongs to the adenoviridae E3A-1 family. In terms of processing, N-glycosylated and probably also O-glycosylated.

It localises to the host nucleus membrane. The chain is Early E3A 11.6 kDa glycoprotein from Human adenovirus C serotype 6 (HAdV-6).